The following is a 193-amino-acid chain: Interferon lambda-2 (193 aa).

Positions 1–19 are cleaved as a signal peptide; sequence MLLLLLPLLLAAVLTRTQA. N-linked (GlcNAc...) asparagine glycosylation is present at asparagine 105.

It belongs to the lambda interferon family.

Its subcellular location is the secreted. Its function is as follows. Cytokine with antiviral, antitumour and immunomodulatory activities. Plays a critical role in the antiviral host defense, predominantly in the epithelial tissues. Acts as a ligand for the heterodimeric class II cytokine receptor composed of IL10RB and IFNLR1, and receptor engagement leads to the activation of the JAK/STAT signaling pathway resulting in the expression of IFN-stimulated genes (ISG), which mediate the antiviral state. Has a restricted receptor distribution and therefore restricted targets: is primarily active in epithelial cells and this cell type-selective action is because of the epithelial cell-specific expression of its receptor IFNLR1. Seems not to be essential for early virus-activated host defense in vaginal infection, but plays an important role in Toll-like receptor (TLR)-induced antiviral defense. Plays a significant role in the antiviral immune defense in the intestinal epithelium. Exerts an immunomodulatory effect by up-regulating MHC class I antigen expression. This chain is Interferon lambda-2 (Ifnl2), found in Mus musculus (Mouse).